The chain runs to 957 residues: Valine--tRNA ligase (957 aa).

Residues 42–52 carry the 'HIGH' region motif; sequence PNVTGSLHMGH. Residues 554-558 carry the 'KMSKS' region motif; the sequence is KMSKS. Residue lysine 557 coordinates ATP. Residues 890-956 adopt a coiled-coil conformation; that stretch reads DKDAELARLA…LEAQQETIAA (67 aa).

The protein belongs to the class-I aminoacyl-tRNA synthetase family. ValS type 1 subfamily. In terms of assembly, monomer.

The protein resides in the cytoplasm. The catalysed reaction is tRNA(Val) + L-valine + ATP = L-valyl-tRNA(Val) + AMP + diphosphate. In terms of biological role, catalyzes the attachment of valine to tRNA(Val). As ValRS can inadvertently accommodate and process structurally similar amino acids such as threonine, to avoid such errors, it has a 'posttransfer' editing activity that hydrolyzes mischarged Thr-tRNA(Val) in a tRNA-dependent manner. The polypeptide is Valine--tRNA ligase (Aliivibrio fischeri (strain ATCC 700601 / ES114) (Vibrio fischeri)).